The following is a 496-amino-acid chain: UDP-glycosyltransferase 73C4 (496 aa).

Residues Ser-297, 357–359, 374–382, and 396–399 contribute to the UDP-alpha-D-glucose site; these read SPQ, HCGWNSTLE, and FGDQ. Residues 450 to 475 form a disordered region; the sequence is SDDAKERRRRVKELGESAHKAVEEGG. Basic and acidic residues predominate over residues 451–472; sequence DDAKERRRRVKELGESAHKAVE.

It belongs to the UDP-glycosyltransferase family.

This chain is UDP-glycosyltransferase 73C4 (UGT73C4), found in Arabidopsis thaliana (Mouse-ear cress).